The sequence spans 252 residues: Imidazole glycerol phosphate synthase subunit HisF (252 aa).

Active-site residues include Asp-12 and Asp-131.

The protein belongs to the HisA/HisF family. Heterodimer of HisH and HisF.

The protein resides in the cytoplasm. It catalyses the reaction 5-[(5-phospho-1-deoxy-D-ribulos-1-ylimino)methylamino]-1-(5-phospho-beta-D-ribosyl)imidazole-4-carboxamide + L-glutamine = D-erythro-1-(imidazol-4-yl)glycerol 3-phosphate + 5-amino-1-(5-phospho-beta-D-ribosyl)imidazole-4-carboxamide + L-glutamate + H(+). The protein operates within amino-acid biosynthesis; L-histidine biosynthesis; L-histidine from 5-phospho-alpha-D-ribose 1-diphosphate: step 5/9. Its function is as follows. IGPS catalyzes the conversion of PRFAR and glutamine to IGP, AICAR and glutamate. The HisF subunit catalyzes the cyclization activity that produces IGP and AICAR from PRFAR using the ammonia provided by the HisH subunit. The protein is Imidazole glycerol phosphate synthase subunit HisF of Thermus thermophilus (strain ATCC BAA-163 / DSM 7039 / HB27).